Consider the following 586-residue polypeptide: ATPase family AAA domain-containing protein 3A (586 aa).

2 disordered regions span residues 1–55 (MSWL…PTGL) and 111–134 (QAEE…QYQD). At Ser2 the chain carries N-acetylserine. Residues 2–50 (SWLFGINKGPKGEGAGPPPPLPPAQPGAEGGGDRGLGDRPAPKDKWSNF) are required for interaction with the inner surface of the mitochondrial outer membrane. Over 2–246 (SWLFGINKGP…FRAFVTDWDK (245 aa)) the chain is Mitochondrial intermembrane. Residues 17 to 26 (GPPPPLPPAQ) show a composition bias toward pro residues. Basic and acidic residues-rich tracts occupy residues 32–48 (GGDR…DKWS) and 111–125 (QAEE…ETRQ). A coiled-coil region spans residues 86–219 (QLEQQSKLKE…QIRLKAAEHR (134 aa)). The helical transmembrane segment at 247–264 (VTATVAGLTLLAVGVYSA) threads the bilayer. Over 265–586 (KNATLVAGRF…PGRGDEPSPS (322 aa)) the chain is Mitochondrial matrix. An S100B-binding region spans residues 290–305 (RITVLEALRHPIQVSR). Ser321 carries the phosphoserine modification. 352-359 (GPPGTGKT) contributes to the ATP binding site. Residue Lys491 is modified to N6-acetyllysine.

It belongs to the AAA ATPase family. As to quaternary structure, can form homooligomers. Homodimer formation at the N-terminus may be regulated by ATP and is required for the interaction with the inner surface of the mitochondrial outer membrane and correct mitochondrial homeostasis. Interacts with components of the mitochondrial ribosome and with other proteins involved in mitochondrial RNA metabolism. May also interact with protein involved in lipid metabolism, including STARD9. May interact with FAM210A. Interacts with GADD45GIP1. Interacts with S100B in a Ca(+2)- and Zn(+2)-dependent manner; this interaction probably occurs in the cytosol prior to mitochondrial targeting. S100B could assist ATAD3A cytoplasmic processing, preventing aggregation and favoring mitochondrial localization. Interacts with HSP60/HSPD1. Forms heterooligomers with ATAD3B; this interaction may affect ATAD3A activity. Interacts with CLPB. Interacts with EIF2AK3/PERK; ATAD3A and EIF2S1/eIF-2-alpha occupy a common binding site within the cytoplasmic loop of EIF2AK3/PERK, leading to prevent EIF2AK3/PERK association with its substrate EIF2S1/eIF-2-alpha. In terms of tissue distribution, overexpressed in lung adenocarcinomas (at protein level).

It localises to the mitochondrion inner membrane. The protein resides in the mitochondrion matrix. It is found in the mitochondrion nucleoid. The enzyme catalyses ATP + H2O = ADP + phosphate + H(+). In terms of biological role, essential for mitochondrial network organization, mitochondrial metabolism and cell growth at organism and cellular level. May play an important role in mitochondrial protein synthesis. May also participate in mitochondrial DNA replication. May bind to mitochondrial DNA D-loops and contribute to nucleoid stability. Required for enhanced channeling of cholesterol for hormone-dependent steroidogenesis. Involved in mitochondrial-mediated antiviral innate immunity. Required to protect mitochondria from the PERK-mediated unfolded protein response: specifically inhibits the activity of EIF2AK3/PERK at mitochondria-endoplasmic reticulum contact sites, thereby providing a safe haven for mitochondrial protein translation during endoplasmic reticulum stress. Ability to inhibit EIF2AK3/PERK is independent of its ATPase activity. Also involved in the mitochondrial DNA damage response by promoting signaling between damaged genomes and the mitochondrial membrane, leading to activation of the integrated stress response (ISR). This chain is ATPase family AAA domain-containing protein 3A, found in Homo sapiens (Human).